Reading from the N-terminus, the 218-residue chain is Phosphoribosylformylglycinamidine synthase subunit PurQ (218 aa).

The 217-residue stretch at 2–218 (SIAVLRFPGT…GARMLRGLAC (217 aa)) folds into the Glutamine amidotransferase type-1 domain. Cys-86 (nucleophile) is an active-site residue. Active-site residues include His-195 and Glu-197.

In terms of assembly, part of the FGAM synthase complex composed of 1 PurL, 1 PurQ and 2 PurS subunits.

Its subcellular location is the cytoplasm. It carries out the reaction N(2)-formyl-N(1)-(5-phospho-beta-D-ribosyl)glycinamide + L-glutamine + ATP + H2O = 2-formamido-N(1)-(5-O-phospho-beta-D-ribosyl)acetamidine + L-glutamate + ADP + phosphate + H(+). The catalysed reaction is L-glutamine + H2O = L-glutamate + NH4(+). It participates in purine metabolism; IMP biosynthesis via de novo pathway; 5-amino-1-(5-phospho-D-ribosyl)imidazole from N(2)-formyl-N(1)-(5-phospho-D-ribosyl)glycinamide: step 1/2. Functionally, part of the phosphoribosylformylglycinamidine synthase complex involved in the purines biosynthetic pathway. Catalyzes the ATP-dependent conversion of formylglycinamide ribonucleotide (FGAR) and glutamine to yield formylglycinamidine ribonucleotide (FGAM) and glutamate. The FGAM synthase complex is composed of three subunits. PurQ produces an ammonia molecule by converting glutamine to glutamate. PurL transfers the ammonia molecule to FGAR to form FGAM in an ATP-dependent manner. PurS interacts with PurQ and PurL and is thought to assist in the transfer of the ammonia molecule from PurQ to PurL. The polypeptide is Phosphoribosylformylglycinamidine synthase subunit PurQ (Wolinella succinogenes (strain ATCC 29543 / DSM 1740 / CCUG 13145 / JCM 31913 / LMG 7466 / NCTC 11488 / FDC 602W) (Vibrio succinogenes)).